The chain runs to 150 residues: Macrodomain Ter protein (150 aa).

This sequence belongs to the MatP family. As to quaternary structure, homodimer.

The protein resides in the cytoplasm. Required for spatial organization of the terminus region of the chromosome (Ter macrodomain) during the cell cycle. Prevents early segregation of duplicated Ter macrodomains during cell division. Binds specifically to matS, which is a 13 bp signature motif repeated within the Ter macrodomain. The polypeptide is Macrodomain Ter protein (Salmonella agona (strain SL483)).